A 596-amino-acid chain; its full sequence is MAEATEPKEVAPGSQGQPEGATIEGPGEPGAADLEGREASEEAAEAPRDLGAGVEARASGKEEGGCGQDEGTGGAQAQDPRTGPEAETPGASGAPGEAEAAERDPEGAIPQGAEEAPSAQQVQGMSSGLDSQGEAPEVPGDSRREPEDPTASEAGEEAESGQEAQGGGALGLQINPEVQGLAGDNMDTEAPAGGPLGSESEPQGGGESSPQPQDEAIEIVTTEIGGNESGELAGASAADAAGEGETLGKDGSEEAASEDARVDAHENGDQGKLQEETGEEEARPEPELKGPCEGAIQEKPPDGSLDGEEAKSTEHEEESQAELSNHLAEEPSVQGGEELGRVNGRRENGPALEEGDPGQEHDITLFVKAGYDGESIGNCPFSQRLFMILWLKGVIFNVTTVDLKRKPADLQNLAPGTNPPFMTFDGEVKTDVNKIEEFLEEKLVPPRYPKLGTQHPESNSAGNDVFAKFSAFIKNTKKDANEIYEKNLLRALKKLDSYLNSPLPDEIDADSSEDVTVSQRKFLDGDELTLADCNLLPKLHIIKIVAKKYRDFEFPSEMTGIWRYLNNAYARDEFTNTCPADREIEHAYSDAAKRMK.

Residues Met-1 to Glu-360 form a disordered region. Residues Leu-34–Arg-48 show a composition bias toward basic and acidic residues. Ser-40 is subject to Phosphoserine. Positions Gly-65–Gly-74 are enriched in gly residues. Over residues Gly-83–Ala-98 the composition is skewed to low complexity. Residues Ser-118 to Asp-130 are compositionally biased toward polar residues. The span at Asp-148–Ser-160 shows a compositional bias: acidic residues. Low complexity-rich tracts occupy residues Gly-197 to Gln-213 and Gly-225 to Gly-244. Residues Thr-246–Gly-290 are compositionally biased toward basic and acidic residues. A Phosphoserine modification is found at Ser-304. Residues Glu-338 to Asn-348 are compositionally biased toward basic and acidic residues. The short motif at Cys-379–Ser-382 is the G-site element. Residues Phe-381 to Val-401 traverse the membrane as a helical segment. Residues Asp-425 to Lys-596 form the GST C-terminal domain.

Belongs to the chloride channel CLIC family. Monomer (soluble state). Interacts with dopamine receptors DRD2, DRD3 and DRD4. Post-translationally, phosphorylated.

The protein resides in the cytoplasm. The protein localises to the cell membrane. It carries out the reaction chloride(in) = chloride(out). With respect to regulation, channel activity is redox- and pH-regulated. Inhibited by IAA-94. Its function is as follows. In the soluble state, catalyzes glutaredoxin-like thiol disulfide exchange reactions with reduced glutathione as electron donor. Can insert into membranes and form voltage-dependent chloride-selective channels. The channel opens upon membrane depolarization at positive voltages and closes at negative membrane voltages. May play a critical role in water-secreting cells, possibly through the regulation of chloride ion transport. This chain is Chloride intracellular channel protein 6 (Clic6), found in Mus musculus (Mouse).